Here is a 733-residue protein sequence, read N- to C-terminus: Fibronectin type III domain-containing protein 7 (733 aa).

The first 25 residues, 1 to 25 (MAGGRETCLPLIGFILICLKMVASA), serve as a signal peptide directing secretion. 8 Fibronectin type-III domains span residues 28–115 (APEI…TVLA), 116–202 (APIL…TSPR), 203–288 (APAN…TVAC), 289–373 (APGR…TAPC), 374–459 (CPSD…TAPC), 460–544 (SPEI…TVPC), 545–632 (CPTG…CCPL), and 631–715 (PLGV…YSVT). The N-linked (GlcNAc...) asparagine glycan is linked to asparagine 230. An N-linked (GlcNAc...) asparagine glycan is attached at asparagine 433.

The protein resides in the secreted. The sequence is that of Fibronectin type III domain-containing protein 7 (FNDC7) from Homo sapiens (Human).